The primary structure comprises 250 residues: Cellulose biosynthesis protein BcsQ (250 aa).

9–16 contributes to the ATP binding site; it reads VRGGVGTT.

This sequence belongs to the BcsQ family.

The protein resides in the cytoplasm. In terms of biological role, essential for cellulose biosynthesis, shown for strain 1094, a commensal, natural cellulose producer. Also shown in strain W3110 which has a restored reading frame (TAG stop codon to TTG for amino acid 6, called strain AR3110), this protein. May play a role in subcellular localization of an active cellulose biosynthesis apparatus at the bacterial cell pole. The combination of cellulose and the curli fiber network confer cohesion, elasticity and tissue-like properties to colonies. This Escherichia coli (strain K12) protein is Cellulose biosynthesis protein BcsQ.